We begin with the raw amino-acid sequence, 552 residues long: Arginine--tRNA ligase (552 aa).

The 'HIGH' region motif lies at 123–133; that stretch reads ANPTGPLTIGR.

Belongs to the class-I aminoacyl-tRNA synthetase family. In terms of assembly, monomer.

The protein resides in the cytoplasm. It carries out the reaction tRNA(Arg) + L-arginine + ATP = L-arginyl-tRNA(Arg) + AMP + diphosphate. In Chlorobium luteolum (strain DSM 273 / BCRC 81028 / 2530) (Pelodictyon luteolum), this protein is Arginine--tRNA ligase.